A 1850-amino-acid polypeptide reads, in one-letter code: Vitellogenin-2 (1850 aa).

Positions 1-15 (MRGIILALVLTLVGS) are cleaved as a signal peptide. The Vitellogenin domain occupies 24-662 (FNSRRSYLYN…SPRTMFPSAI (639 aa)). Asn604 carries N-linked (GlcNAc...) asparagine glycosylation. The interval 935 to 984 (DAPLDVTEEPFQTSERASREHFAMQGPDSMPRKQSHSSREDLRRSTGKRA) is disordered. Residue Asn1094 is glycosylated (N-linked (GlcNAc...) asparagine). 2 disordered regions span residues 1115-1313 (GTEP…SSSS) and 1338-1362 (EFPK…SHDT). Residues 1122–1143 (TSSSSSSASSTATSSSSSSASS) show a composition bias toward low complexity. Positions 1156-1165 (DQVKQARNKD) are enriched in basic and acidic residues. The span at 1167–1266 (SSSSRSSKSS…SRSSSSSSKS (100 aa)) shows a compositional bias: low complexity. 2 N-linked (GlcNAc...) asparagine glycosylation sites follow: Asn1177 and Asn1188. The segment covering 1267 to 1277 (SSHHSHSHHSG) has biased composition (basic residues). The segment covering 1278–1291 (HLNGSSSSSSSSRS) has biased composition (low complexity). Asn1280 carries N-linked (GlcNAc...) asparagine glycosylation. The span at 1338–1350 (EFPKRKLPGDRAT) shows a compositional bias: basic and acidic residues. Asn1417, Asn1597, and Asn1665 each carry an N-linked (GlcNAc...) asparagine glycan. Residues 1579–1756 (ARCSVSYNKI…SWILEEAPCR (178 aa)) enclose the VWFD domain. 2 cysteine pairs are disulfide-bonded: Cys1581–Cys1719 and Cys1604–Cys1755.

In terms of processing, phosvitin, an egg yolk storage protein, is one of the most highly phosphorylated (10%) proteins in nature. Cathepsin D is responsible for intraoocytic processing of vitellogenin. Post-translationally, may contain intrachain disulfide bonds. As to expression, after incorporation from serum via a specific receptor, it is cleaved into four fragments, heavy and light chain lipovitellins, phosphovitin and YGP40, and YGP40 is released into the yolk plasma before or during compartmentation of lipovitellin-phosvitin complex into the yolk granule.

Functionally, precursor of the major egg-yolk proteins that are sources of nutrients during early development of oviparous organisms. Its function is as follows. Phosvitin is believed to be of importance in sequestering calcium, iron and other cations for the developing embryo. The polypeptide is Vitellogenin-2 (VTG2) (Gallus gallus (Chicken)).